A 164-amino-acid chain; its full sequence is Transcriptional repressor NrdR (164 aa).

Residues 3–34 fold into a zinc finger; that stretch reads CPKCNYHKSSVVDSRQAEDGNTIRRRRECEQC. In terms of domain architecture, ATP-cone spans 49-139; the sequence is LLVIKKDGTR…VYKSFKDVDE (91 aa).

This sequence belongs to the NrdR family. The cofactor is Zn(2+).

Its function is as follows. Negatively regulates transcription of bacterial ribonucleotide reductase nrd genes and operons by binding to NrdR-boxes. The sequence is that of Transcriptional repressor NrdR from Streptococcus pyogenes serotype M6 (strain ATCC BAA-946 / MGAS10394).